Consider the following 410-residue polypeptide: Phosphoglycerate kinase (410 aa).

Substrate contacts are provided by residues 19–21, R34, 57–60, R114, and R154; these read DLN and HQGK. Residues E332 and 358 to 361 each bind ATP; that span reads GGHS.

This sequence belongs to the phosphoglycerate kinase family. As to quaternary structure, homodimer.

The protein localises to the cytoplasm. It carries out the reaction (2R)-3-phosphoglycerate + ATP = (2R)-3-phospho-glyceroyl phosphate + ADP. The protein operates within carbohydrate degradation; glycolysis; pyruvate from D-glyceraldehyde 3-phosphate: step 2/5. This chain is Phosphoglycerate kinase (pgk), found in Pyrococcus furiosus (strain ATCC 43587 / DSM 3638 / JCM 8422 / Vc1).